The sequence spans 655 residues: DNA topoisomerase 4 subunit B (655 aa).

Residues Tyr-9, Asn-49, Asp-76, 116–122 (GLHGVGA), and Lys-340 each bind ATP. The span at 387–397 (AARKAREEARS) shows a compositional bias: basic and acidic residues. The segment at 387-419 (AARKAREEARSGKKRKKSEATLSGKLTPAGSRN) is disordered. The Toprim domain maps to 423 to 537 (NELYLVEGDS…HGKVFIALPP (115 aa)). The Mg(2+) site is built by Glu-429, Asp-502, and Asp-504.

It belongs to the type II topoisomerase family. ParE type 2 subfamily. As to quaternary structure, heterotetramer composed of ParC and ParE. Mg(2+) is required as a cofactor. It depends on Mn(2+) as a cofactor. The cofactor is Ca(2+).

The enzyme catalyses ATP-dependent breakage, passage and rejoining of double-stranded DNA.. Functionally, topoisomerase IV is essential for chromosome segregation. It relaxes supercoiled DNA. Performs the decatenation events required during the replication of a circular DNA molecule. The protein is DNA topoisomerase 4 subunit B of Bacillus subtilis (strain 168).